The following is a 313-amino-acid chain: tRNA dimethylallyltransferase (313 aa).

9–16 lines the ATP pocket; it reads GPTASGKT. 11-16 contributes to the substrate binding site; that stretch reads TASGKT. Positions 34 to 37 are interaction with substrate tRNA; sequence DSMQ.

It belongs to the IPP transferase family. Monomer. The cofactor is Mg(2+).

It carries out the reaction adenosine(37) in tRNA + dimethylallyl diphosphate = N(6)-dimethylallyladenosine(37) in tRNA + diphosphate. Its function is as follows. Catalyzes the transfer of a dimethylallyl group onto the adenine at position 37 in tRNAs that read codons beginning with uridine, leading to the formation of N6-(dimethylallyl)adenosine (i(6)A). This is tRNA dimethylallyltransferase from Acetivibrio thermocellus (strain ATCC 27405 / DSM 1237 / JCM 9322 / NBRC 103400 / NCIMB 10682 / NRRL B-4536 / VPI 7372) (Clostridium thermocellum).